The primary structure comprises 112 residues: NADH-quinone oxidoreductase subunit K (112 aa).

The next 3 helical transmembrane spans lie at 14–34 (LEGY…GALI), 39–59 (VVVF…LVAF), and 76–96 (LIIA…LAIF).

The protein belongs to the complex I subunit 4L family. As to quaternary structure, NDH-1 is composed of 14 different subunits. Subunits NuoA, H, J, K, L, M, N constitute the membrane sector of the complex.

The protein localises to the cell membrane. It carries out the reaction a quinone + NADH + 5 H(+)(in) = a quinol + NAD(+) + 4 H(+)(out). NDH-1 shuttles electrons from NADH, via FMN and iron-sulfur (Fe-S) centers, to quinones in the respiratory chain. The immediate electron acceptor for the enzyme in this species is believed to be a menaquinone. Couples the redox reaction to proton translocation (for every two electrons transferred, four hydrogen ions are translocated across the cytoplasmic membrane), and thus conserves the redox energy in a proton gradient. The chain is NADH-quinone oxidoreductase subunit K from Rubrobacter xylanophilus (strain DSM 9941 / JCM 11954 / NBRC 16129 / PRD-1).